The sequence spans 435 residues: Mitochondrial association factor 1 form a1 (435 aa).

Positions 1–20 (MWRIWRCRLSFLFATGCLLG) are cleaved as a signal peptide. Over 21–96 (ALTAGLGSQM…VTARRRRNRR (76 aa)) the chain is Vacuolar. A helical transmembrane segment spans residues 97 to 117 (IALIATAVGVAVILAALYVLR). Topologically, residues 118–435 (RRRAQPPQEP…ERTYTFPQGD (318 aa)) are cytoplasmic. Residues 120-159 (RAQPPQEPEPPTRLRTPRPRAPSGQQQPSESEPPAGVPMT) form a disordered region.

In terms of assembly, interacts with host SAMM50.

It localises to the parasitophorous vacuole membrane. During host cell infection by tachyzoites, does not play a role in tethering the parasitophorous vacuole to the host mitochondria, probably because it does not bind host mitochondrial import protein TOMM70. This chain is Mitochondrial association factor 1 form a1, found in Toxoplasma gondii (strain ATCC 50611 / Me49).